A 126-amino-acid chain; its full sequence is Large ribosomal subunit protein bL17 (126 aa).

The protein belongs to the bacterial ribosomal protein bL17 family. As to quaternary structure, part of the 50S ribosomal subunit. Contacts protein L32.

The polypeptide is Large ribosomal subunit protein bL17 (Xylella fastidiosa (strain 9a5c)).